The primary structure comprises 308 residues: tRNA dimethylallyltransferase (308 aa).

10–17 (GPTASGKT) is a binding site for ATP. Residue 12-17 (TASGKT) coordinates substrate. Interaction with substrate tRNA stretches follow at residues 35 to 38 (DSSL) and 159 to 163 (QRIFR).

This sequence belongs to the IPP transferase family. Monomer. Mg(2+) serves as cofactor.

It catalyses the reaction adenosine(37) in tRNA + dimethylallyl diphosphate = N(6)-dimethylallyladenosine(37) in tRNA + diphosphate. Its function is as follows. Catalyzes the transfer of a dimethylallyl group onto the adenine at position 37 in tRNAs that read codons beginning with uridine, leading to the formation of N6-(dimethylallyl)adenosine (i(6)A). The sequence is that of tRNA dimethylallyltransferase from Francisella philomiragia subsp. philomiragia (strain ATCC 25017 / CCUG 19701 / FSC 153 / O#319-036).